The following is a 318-amino-acid chain: Cytochrome c biogenesis protein CcsA (318 aa).

The next 8 membrane-spanning stretches (helical) occupy residues 17–37 (VLAL…ISFW), 45–65 (SAVV…QLVL), 75–95 (ISNL…AQLL), 104–124 (IVSA…SFAL), 149–169 (VIMC…AVLF), 224–244 (TITV…VWAN), 258–275 (TWAL…HTRF), and 287–307 (VAVA…LLGI).

Belongs to the CcmF/CycK/Ccl1/NrfE/CcsA family. May interact with ccs1.

The protein localises to the cellular thylakoid membrane. Functionally, required during biogenesis of c-type cytochromes (cytochrome c6 and cytochrome f) at the step of heme attachment. In Prochlorococcus marinus (strain MIT 9303), this protein is Cytochrome c biogenesis protein CcsA.